We begin with the raw amino-acid sequence, 355 residues long: MKQNKRLMVMAGGTGGHVFPGLAVAKQLQEQGWEIRWLGTADRMEADLVPKHGIEIDFIKVKGLRGQGVKRLLAAPFQIINAIMQARAHMKRWQPDAVLGMGGYVSGPGGIAAWLSGIPVVLHEQNAVAGLTNQWLSKIAKKVFQAFPGAFPSAAVVGNPVREDVTQLDEPAQRMQEREGPIRILVMGGSQGARILNQTLPAVMANLGQDYCIRHQAGKGAAQEVQAAYQANNVANAEVTEFIDDVAQAYAWADLLVCRSGALTVSEVSAAGVGAIFIPFMHKDRQQALNADHLVECGAAKMIEQPDLTVESLTQQIQQLDRQALLSMAQKARSAAKLDADKVVAQAIVALTEKR.

UDP-N-acetyl-alpha-D-glucosamine contacts are provided by residues threonine 14–glycine 16, asparagine 126, arginine 162, serine 190, isoleucine 243, alanine 262–glutamate 267, and glutamine 287.

Belongs to the glycosyltransferase 28 family. MurG subfamily.

The protein resides in the cell inner membrane. It catalyses the reaction di-trans,octa-cis-undecaprenyl diphospho-N-acetyl-alpha-D-muramoyl-L-alanyl-D-glutamyl-meso-2,6-diaminopimeloyl-D-alanyl-D-alanine + UDP-N-acetyl-alpha-D-glucosamine = di-trans,octa-cis-undecaprenyl diphospho-[N-acetyl-alpha-D-glucosaminyl-(1-&gt;4)]-N-acetyl-alpha-D-muramoyl-L-alanyl-D-glutamyl-meso-2,6-diaminopimeloyl-D-alanyl-D-alanine + UDP + H(+). It participates in cell wall biogenesis; peptidoglycan biosynthesis. Functionally, cell wall formation. Catalyzes the transfer of a GlcNAc subunit on undecaprenyl-pyrophosphoryl-MurNAc-pentapeptide (lipid intermediate I) to form undecaprenyl-pyrophosphoryl-MurNAc-(pentapeptide)GlcNAc (lipid intermediate II). This is UDP-N-acetylglucosamine--N-acetylmuramyl-(pentapeptide) pyrophosphoryl-undecaprenol N-acetylglucosamine transferase from Vibrio parahaemolyticus serotype O3:K6 (strain RIMD 2210633).